The primary structure comprises 239 residues: DNA repair protein RecO (239 aa).

This sequence belongs to the RecO family.

Its function is as follows. Involved in DNA repair and RecF pathway recombination. The polypeptide is DNA repair protein RecO (Glaesserella parasuis serovar 5 (strain SH0165) (Haemophilus parasuis)).